The sequence spans 1024 residues: Beta-galactosidase (1024 aa).

Residues asparagine 103 and aspartate 202 each coordinate substrate. Na(+) is bound at residue aspartate 202. Mg(2+) contacts are provided by glutamate 417, histidine 419, and glutamate 462. Residues glutamate 462 and 538–541 each bind substrate; that span reads EYAH. The active-site Proton donor is the glutamate 462. Residue glutamate 538 is the Nucleophile of the active site. Asparagine 598 contacts Mg(2+). Residues phenylalanine 602 and asparagine 605 each coordinate Na(+). Residues asparagine 605 and tryptophan 1000 each contribute to the substrate site.

It belongs to the glycosyl hydrolase 2 family. Homotetramer. Mg(2+) is required as a cofactor. The cofactor is Na(+).

It carries out the reaction Hydrolysis of terminal non-reducing beta-D-galactose residues in beta-D-galactosides.. This chain is Beta-galactosidase, found in Escherichia coli O6:H1 (strain CFT073 / ATCC 700928 / UPEC).